The following is a 162-amino-acid chain: NADH-quinone oxidoreductase subunit I (162 aa).

2 4Fe-4S ferredoxin-type domains span residues 53 to 83 and 93 to 122; these read LRRY…IEAE and TRYD…EGPN. [4Fe-4S] cluster-binding residues include Cys-63, Cys-66, Cys-69, Cys-73, Cys-102, Cys-105, Cys-108, and Cys-112.

It belongs to the complex I 23 kDa subunit family. NDH-1 is composed of 14 different subunits. Subunits NuoA, H, J, K, L, M, N constitute the membrane sector of the complex. [4Fe-4S] cluster is required as a cofactor.

It is found in the cell inner membrane. The catalysed reaction is a quinone + NADH + 5 H(+)(in) = a quinol + NAD(+) + 4 H(+)(out). Functionally, NDH-1 shuttles electrons from NADH, via FMN and iron-sulfur (Fe-S) centers, to quinones in the respiratory chain. The immediate electron acceptor for the enzyme in this species is believed to be ubiquinone. Couples the redox reaction to proton translocation (for every two electrons transferred, four hydrogen ions are translocated across the cytoplasmic membrane), and thus conserves the redox energy in a proton gradient. The polypeptide is NADH-quinone oxidoreductase subunit I (Maricaulis maris (strain MCS10) (Caulobacter maris)).